The sequence spans 155 residues: Regulatory protein RecX (155 aa).

The protein belongs to the RecX family.

The protein resides in the cytoplasm. Functionally, modulates RecA activity. This chain is Regulatory protein RecX, found in Pseudomonas savastanoi pv. phaseolicola (strain 1448A / Race 6) (Pseudomonas syringae pv. phaseolicola (strain 1448A / Race 6)).